We begin with the raw amino-acid sequence, 61 residues long: Small ribosomal subunit protein uS14C (61 aa).

C24, C27, C40, and C43 together coordinate Zn(2+).

Belongs to the universal ribosomal protein uS14 family. Zinc-binding uS14 subfamily. As to quaternary structure, part of the 30S ribosomal subunit. Contacts proteins S3 and S10. Zn(2+) is required as a cofactor.

Functionally, binds 16S rRNA, required for the assembly of 30S particles and may also be responsible for determining the conformation of the 16S rRNA at the A site. This is Small ribosomal subunit protein uS14C from Bacillus licheniformis (strain ATCC 14580 / DSM 13 / JCM 2505 / CCUG 7422 / NBRC 12200 / NCIMB 9375 / NCTC 10341 / NRRL NRS-1264 / Gibson 46).